Reading from the N-terminus, the 536-residue chain is CTP synthase (536 aa).

The segment at M1–L267 is amidoligase domain. S13 is a CTP binding site. S13 serves as a coordination point for UTP. An ATP-binding site is contributed by S14–I19. Y54 is an L-glutamine binding site. D71 serves as a coordination point for ATP. Mg(2+) is bound by residues D71 and E141. Residues D148–E150, K188–Q193, and K224 each bind CTP. UTP-binding positions include K188–Q193 and K224. An ATP-binding site is contributed by R240 to A242. The Glutamine amidotransferase type-1 domain maps to T293–S535. G355 provides a ligand contact to L-glutamine. The Nucleophile; for glutamine hydrolysis role is filled by C382. L-glutamine contacts are provided by residues L383–Q386, E406, and R463. Residues H508 and E510 contribute to the active site.

It belongs to the CTP synthase family. In terms of assembly, homotetramer.

It catalyses the reaction UTP + L-glutamine + ATP + H2O = CTP + L-glutamate + ADP + phosphate + 2 H(+). The catalysed reaction is L-glutamine + H2O = L-glutamate + NH4(+). It carries out the reaction UTP + NH4(+) + ATP = CTP + ADP + phosphate + 2 H(+). Its pathway is pyrimidine metabolism; CTP biosynthesis via de novo pathway; CTP from UDP: step 2/2. Allosterically activated by GTP, when glutamine is the substrate; GTP has no effect on the reaction when ammonia is the substrate. The allosteric effector GTP functions by stabilizing the protein conformation that binds the tetrahedral intermediate(s) formed during glutamine hydrolysis. Inhibited by the product CTP, via allosteric rather than competitive inhibition. Catalyzes the ATP-dependent amination of UTP to CTP with either L-glutamine or ammonia as the source of nitrogen. Regulates intracellular CTP levels through interactions with the four ribonucleotide triphosphates. The chain is CTP synthase from Staphylococcus saprophyticus subsp. saprophyticus (strain ATCC 15305 / DSM 20229 / NCIMB 8711 / NCTC 7292 / S-41).